The primary structure comprises 2491 residues: Cation-independent mannose-6-phosphate receptor (2491 aa).

A signal peptide spans 1–40 (MGAAAGRSPHLGPAPARRPQRSLLLLQLLLLVAAPGSTQA). At 41–2304 (QAAPFPELCS…MHKGLSERSQ (2264 aa)) the chain is on the lumenal side. 12 MRH domains span residues 47 to 163 (ELCS…ACKK), 172 to 320 (VPCY…ACHR), 326 to 468 (KTCS…ACVK), 473 to 619 (LLCG…ACVL), 625 to 762 (ENCT…ACPE), 765 to 924 (LECV…ACPI), 932 to 1079 (QACS…ACVP), 1082 to 1219 (VDCQ…ACPV), 1225 to 1363 (DNCE…ACPP), 1367 to 1508 (TECS…ACPM), 1514 to 1648 (DDCQ…ACEQ), and 1650 to 1797 (TECS…VCPD). Disulfide bonds link C49/C69 and C77/C84. N-linked (GlcNAc...) asparagine glycosylation is present at N112. 8 disulfide bridges follow: C117–C149, C134–C161, C174–C212, C228–C235, C275–C306, C288–C318, C328–C366, and C374–C382. N-linked (GlcNAc...) asparagine glycosylation is found at N400 and N435. Cystine bridges form between C420-C454, C434-C466, C475-C519, and C531-C538. N-linked (GlcNAc...) asparagine glycans are attached at residues N543 and N581. 2 disulfide bridges follow: C572–C605 and C586–C617. The N-linked (GlcNAc...) asparagine glycan is linked to N626. Intrachain disulfides connect C627–C664, C672–C679, C731–C760, C767–C814, and C823–C830. An N-linked (GlcNAc...) asparagine glycan is attached at N747. The N-linked (GlcNAc...) asparagine glycan is linked to N871. Disulfide bonds link C875–C910, C893–C922, C934–C970, C976–C987, C1042–C1077, C1084–C1125, and C1134–C1142. N-linked (GlcNAc...) asparagine glycans are attached at residues N951 and N957. N1164 is a glycosylation site (N-linked (GlcNAc...) asparagine). Cystine bridges form between C1177/C1205, C1190/C1217, C1227/C1262, and C1270/C1282. The N-linked (GlcNAc...) asparagine glycan is linked to N1246. The N-linked (GlcNAc...) asparagine glycan is linked to N1312. Intrachain disulfides connect C1319–C1349, C1333–C1361, C1369–C1408, C1420–C1427, C1461–C1494, C1476–C1506, C1516–C1553, C1559–C1566, C1598–C1634, C1614–C1646, C1652–C1695, C1706–C1713, C1750–C1783, C1766–C1795, C1804–C1839, C1850–C1856, C1893–C1975, C1903–C1927, C1917–C1942, C1957–C1987, C1994–C2029, C2039–C2046, C2082–C2113, and C2096–C2125. N-linked (GlcNAc...) asparagine glycosylation occurs at N1656. A glycan (N-linked (GlcNAc...) asparagine) is linked at N1757. The Fibronectin type-II domain maps to 1802-1989 (DGCTLTDEQL…EWKTKVVCPP (188 aa)). N1816 carries an N-linked (GlcNAc...) asparagine glycan. MRH domains are found at residues 1992 to 2127 (LECK…ACAV) and 2135 to 2280 (VNGT…VCPL). N2085 carries N-linked (GlcNAc...) asparagine glycosylation. N-linked (GlcNAc...) asparagine glycosylation is present at N2136. Intrachain disulfides connect C2188-C2194, C2232-C2266, and C2248-C2278. The helical transmembrane segment at 2305 to 2327 (AVGAVLSLLLVALTCCLLALLLY) threads the bilayer. Residues 2328 to 2491 (KKERRETVIS…DDSDEDLLHI (164 aa)) lie on the Cytoplasmic side of the membrane. K2352 carries the N6-acetyllysine modification. A Phosphoserine modification is found at S2409. The tract at residues 2424-2491 (GRGAGAESSH…DDSDEDLLHI (68 aa)) is disordered. Position 2425 is an omega-N-methylarginine (R2425). The segment covering 2444-2459 (QEREDDRVGLVRGEKA) has biased composition (basic and acidic residues). Residues 2464-2477 (SSSAQQKTVSSTKL) are compositionally biased toward polar residues. A phosphoserine mark is found at S2479 and S2484. Residues 2479 to 2491 (SFHDDSDEDLLHI) are compositionally biased toward basic and acidic residues.

Belongs to the MRL1/IGF2R family. In terms of assembly, binds HA-I and HA-II plasma membrane adapters. Interacts with DPP4; the interaction is direct. Binds GGA1, GGA2 and GGA3. Interacts with the heterotrimeric retromer cargo-selective complex (CSC), formed by VPS26 (VPS26A or VPS26B), VPS29 and VPS35; which is involved in retrograde trafficking of the receptor from endosomes to the Golgi apparatus. In terms of processing, palmitoylated. Undergoes cysteine S-palmitoylation which promotes interaction with the retromer cargo-selective complex which mediates its retrograde trafficking to the Golgi apparatus.

The protein localises to the golgi apparatus membrane. It is found in the endosome membrane. Mediates the transport of phosphorylated lysosomal enzymes from the Golgi complex and the cell surface to lysosomes. Lysosomal enzymes bearing phosphomannosyl residues bind specifically to mannose-6-phosphate receptors in the Golgi apparatus and the resulting receptor-ligand complex is transported to an acidic prelysosomal compartment where the low pH mediates the dissociation of the complex. The receptor is then recycled back to the Golgi for another round of trafficking through its binding to the retromer. This receptor also binds IGF2. Acts as a positive regulator of T-cell coactivation by binding DPP4. This Homo sapiens (Human) protein is Cation-independent mannose-6-phosphate receptor (IGF2R).